The sequence spans 400 residues: Elongation factor Tu 2 (400 aa).

The tr-type G domain maps to lysine 10 to glutamine 209. The tract at residues glycine 19–threonine 26 is G1. Position 19 to 26 (glycine 19 to threonine 26) interacts with GTP. Position 26 (threonine 26) interacts with Mg(2+). Residues glycine 60–asparagine 64 are G2. The interval aspartate 81–glycine 84 is G3. Residues aspartate 81–histidine 85 and asparagine 136–aspartate 139 contribute to the GTP site. The segment at asparagine 136–aspartate 139 is G4. The tract at residues serine 174–leucine 176 is G5.

The protein belongs to the TRAFAC class translation factor GTPase superfamily. Classic translation factor GTPase family. EF-Tu/EF-1A subfamily. Monomer.

It localises to the cytoplasm. It carries out the reaction GTP + H2O = GDP + phosphate + H(+). GTP hydrolase that promotes the GTP-dependent binding of aminoacyl-tRNA to the A-site of ribosomes during protein biosynthesis. The polypeptide is Elongation factor Tu 2 (Carboxydothermus hydrogenoformans (strain ATCC BAA-161 / DSM 6008 / Z-2901)).